Here is a 91-residue protein sequence, read N- to C-terminus: Large ribosomal subunit protein eL34 (91 aa).

Residues 48–71 are disordered; sequence RGRPVEMRKLPKTKKRPERPYPHL.

It belongs to the eukaryotic ribosomal protein eL34 family.

The chain is Large ribosomal subunit protein eL34 (rpl34e) from Pyrococcus abyssi (strain GE5 / Orsay).